The chain runs to 449 residues: Hyaluronidase (449 aa).

The N-terminal stretch at 1-23 is a signal peptide; the sequence is MYHLWIKCLAAWIFLKRFNGVHV. Cystine bridges form between C47–C340 and C211–C227. 2 N-linked (GlcNAc...) asparagine glycosylation sites follow: N67 and N103. E135 acts as the Proton donor in catalysis. The N-linked (GlcNAc...) asparagine glycan is linked to N153. Residue N357 is glycosylated (N-linked (GlcNAc...) asparagine). Disulfide bonds link C365-C376, C370-C427, and C429-C438. An N-linked (GlcNAc...) asparagine glycan is attached at N401. The EGF-like domain occupies 427-438; it reads CQCYQGWQGLYC.

Belongs to the glycosyl hydrolase 56 family. As to quaternary structure, monomer. Expressed by the venom gland.

The protein localises to the secreted. It carries out the reaction Random hydrolysis of (1-&gt;4)-linkages between N-acetyl-beta-D-glucosamine and D-glucuronate residues in hyaluronate.. Snake venom endo-hyaluronidase that degrades hyaluronan to smaller oligosaccharide fragments. In venom, it is not toxic by itself, but increases the diffusion of other venom proteins by degrading the extracellular matrix. In addition, it displays antiedematogenic activity. The chain is Hyaluronidase from Echis ocellatus (Ocellated saw-scaled viper).